Reading from the N-terminus, the 587-residue chain is Sulfite reductase [NADPH] hemoprotein beta-component (587 aa).

Residues 1–13 are compositionally biased toward polar residues; the sequence is MQSTDNDLSQSPP. A disordered region spans residues 1–20; that stretch reads MQSTDNDLSQSPPKLSADEQ. Cys439, Cys445, Cys484, and Cys488 together coordinate [4Fe-4S] cluster. Cys488 serves as a coordination point for siroheme.

It belongs to the nitrite and sulfite reductase 4Fe-4S domain family. As to quaternary structure, alpha(8)-beta(8). The alpha component is a flavoprotein, the beta component is a hemoprotein. Requires siroheme as cofactor. The cofactor is [4Fe-4S] cluster.

The catalysed reaction is hydrogen sulfide + 3 NADP(+) + 3 H2O = sulfite + 3 NADPH + 4 H(+). Its pathway is sulfur metabolism; hydrogen sulfide biosynthesis; hydrogen sulfide from sulfite (NADPH route): step 1/1. Component of the sulfite reductase complex that catalyzes the 6-electron reduction of sulfite to sulfide. This is one of several activities required for the biosynthesis of L-cysteine from sulfate. This chain is Sulfite reductase [NADPH] hemoprotein beta-component, found in Bordetella petrii (strain ATCC BAA-461 / DSM 12804 / CCUG 43448).